The following is a 1259-amino-acid chain: Receptor tyrosine-protein kinase erbB-2 (1259 aa).

Residues 1–22 form the signal peptide; sequence MELAAWCRWGLLLALLPSGAAG. Residues 23-653 lie on the Extracellular side of the membrane; that stretch reads TQVCTGTDMK…EQRASPVTSI (631 aa). An intrachain disulfide couples Cys-26 to Cys-53. Asn-68 is a glycosylation site (N-linked (GlcNAc...) asparagine). 13 cysteine pairs are disulfide-bonded: Cys-162–Cys-192, Cys-195–Cys-204, Cys-199–Cys-212, Cys-220–Cys-227, Cys-224–Cys-235, Cys-236–Cys-244, Cys-240–Cys-252, Cys-255–Cys-264, Cys-268–Cys-295, Cys-299–Cys-311, Cys-315–Cys-331, Cys-334–Cys-338, and Cys-342–Cys-367. At Thr-182 the chain carries Phosphothreonine. Residue Asn-259 is glycosylated (N-linked (GlcNAc...) asparagine). N-linked (GlcNAc...) asparagine glycosylation occurs at Asn-421. 3 cysteine pairs are disulfide-bonded: Cys-475/Cys-504, Cys-511/Cys-519, and Cys-514/Cys-527. Residue Asn-529 is glycosylated (N-linked (GlcNAc...) asparagine). Cystine bridges form between Cys-530/Cys-539, Cys-543/Cys-559, Cys-562/Cys-575, Cys-566/Cys-583, Cys-586/Cys-595, Cys-599/Cys-622, Cys-625/Cys-633, and Cys-629/Cys-641. Residue Asn-570 is glycosylated (N-linked (GlcNAc...) asparagine). The N-linked (GlcNAc...) asparagine glycan is linked to Asn-628. Residues 654 to 674 form a helical membrane-spanning segment; it reads IAAVVGILLAVVVGLVLGILI. A required for interaction with KPNB1 and EEA1 region spans residues 675–688; sequence KRRRQKIRKYTMRR. The short motif at 675–688 is the Nuclear localization signal element; the sequence is KRRRQKIRKYTMRR. Over 675-1259 the chain is Cytoplasmic; it reads KRRRQKIRKY…PEYLGLDVPV (585 aa). Residues 719 to 986 form the Protein kinase domain; that stretch reads LRKVKVLGSG…RMARDPQRFV (268 aa). ATP contacts are provided by residues 725-733 and Lys-752; that span reads LGSGAFGTV. Residue Asp-844 is the Proton acceptor of the active site. Phosphotyrosine is present on Tyr-876. Residues 1027–1183 are disordered; sequence QGFFCPEPTP…PKTLSPGKNG (157 aa). Phosphoserine is present on residues Ser-1077, Ser-1082, and Ser-1106. Tyr-1111 is modified (phosphotyrosine). Residue Tyr-1138 is modified to Phosphotyrosine; by autocatalysis. The span at 1145–1160 shows a compositional bias: pro residues; that stretch reads WPQPPLALEGPLPPSR. Position 1165 is a phosphothreonine (Thr-1165). The tract at residues 1199–1201 is interaction with PIK3C2B; it reads EYL. Tyr-1200 bears the Phosphotyrosine mark. Residues 1203–1259 are disordered; that stretch reads PRGRAAPQPHPPPAFSPAFDNLYYWDQDPSERGSPPSTFEGTPTAENPEYLGLDVPV. A compositionally biased stretch (polar residues) spans 1237 to 1247; the sequence is PPSTFEGTPTA. Tyr-1252 carries the phosphotyrosine; by autocatalysis modification.

Belongs to the protein kinase superfamily. Tyr protein kinase family. EGF receptor subfamily. Homodimer. Heterodimer with EGFR, ERBB3 and ERBB4. Part of a complex with EGFR and either PIK3C2A or PIK3C2B. May interact with PIK3C2B when phosphorylated on Tyr-1200. Interacts with PRKCABP and PLXNB1. Interacts (when phosphorylated on Tyr-1252) with MEMO1. Interacts with MUC1. Interacts (when phosphorylated on Tyr-1138) with GRB7 (via SH2 domain). Interacts (when phosphorylated on Tyr-1252) with ERBIN. Interacts with SRC, KPNB1, PTK6, RANBP2, EEA1, CRM1, CLTC, RPA194, MYOC and ACTB. Interacts (preferentially with the tyrosine phosphorylated form) with CPNE3; this interaction occurs at the cell membrane and is increased in a growth factor heregulin-dependent manner. Interacts with HSP90AA1 and HSP90AB1 in an ATP-dependent manner; the interaction suppresses ERBB2 kinase activity. Interacts with SORL1; this interaction regulates ERBB2 subcellular distribution by promoting its recycling after internalization from endosomes back to the plasma membrane, hence stimulates ERBB2-mediated signaling. Interacts with SH3BGRL. Interacts with ROR1. In terms of processing, autophosphorylated. Autophosphorylation occurs in trans, i.e. one subunit of the dimeric receptor phosphorylates tyrosine residues on the other subunit. Ligand-binding increases phosphorylation on tyrosine residues. Signaling via SEMA4C promotes phosphorylation at Tyr-1252. Dephosphorylated by PTPN12.

Its subcellular location is the cell membrane. The protein resides in the cell projection. It localises to the ruffle membrane. The protein localises to the early endosome. It is found in the cytoplasm. Its subcellular location is the perinuclear region. The protein resides in the nucleus. It catalyses the reaction L-tyrosyl-[protein] + ATP = O-phospho-L-tyrosyl-[protein] + ADP + H(+). Protein tyrosine kinase that is part of several cell surface receptor complexes, but that apparently needs a coreceptor for ligand binding. Essential component of a neuregulin-receptor complex, although neuregulins do not interact with it alone. GP30 is a potential ligand for this receptor. Regulates outgrowth and stabilization of peripheral microtubules (MTs). Upon ERBB2 activation, the MEMO1-RHOA-DIAPH1 signaling pathway elicits the phosphorylation and thus the inhibition of GSK3B at cell membrane. This prevents the phosphorylation of APC and CLASP2, allowing its association with the cell membrane. In turn, membrane-bound APC allows the localization of MACF1 to the cell membrane, which is required for microtubule capture and stabilization. In terms of biological role, in the nucleus is involved in transcriptional regulation. Associates with the 5'-TCAAATTC-3' sequence in the PTGS2/COX-2 promoter and activates its transcription. Implicated in transcriptional activation of CDKN1A; the function involves STAT3 and SRC. Involved in the transcription of rRNA genes by RNA Pol I and enhances protein synthesis and cell growth. In Canis lupus familiaris (Dog), this protein is Receptor tyrosine-protein kinase erbB-2 (ERBB2).